Reading from the N-terminus, the 803-residue chain is Protein translocase subunit SecA (803 aa).

Residues Gln100, 118-122, and Asp508 contribute to the ATP site; that span reads GEGKT.

It belongs to the SecA family. In terms of assembly, monomer and homodimer. Part of the essential Sec protein translocation apparatus which comprises SecA, SecYEG and auxiliary proteins SecDF. Other proteins may also be involved.

It localises to the cell membrane. The protein localises to the cytoplasm. It catalyses the reaction ATP + H2O + cellular proteinSide 1 = ADP + phosphate + cellular proteinSide 2.. Its function is as follows. Part of the Sec protein translocase complex. Interacts with the SecYEG preprotein conducting channel. Has a central role in coupling the hydrolysis of ATP to the transfer of proteins into and across the cell membrane, serving as an ATP-driven molecular motor driving the stepwise translocation of polypeptide chains across the membrane. The chain is Protein translocase subunit SecA from Leuconostoc mesenteroides subsp. mesenteroides (strain ATCC 8293 / DSM 20343 / BCRC 11652 / CCM 1803 / JCM 6124 / NCDO 523 / NBRC 100496 / NCIMB 8023 / NCTC 12954 / NRRL B-1118 / 37Y).